The following is a 433-amino-acid chain: 3-phosphoshikimate 1-carboxyvinyltransferase (433 aa).

3-phosphoshikimate-binding residues include Lys21, Ser22, and Arg26. Lys21 is a phosphoenolpyruvate binding site. Gly96 and Arg124 together coordinate phosphoenolpyruvate. 3-phosphoshikimate-binding residues include Ser167, Ser168, Gln169, Ser195, Asp310, and Lys337. Gln169 contributes to the phosphoenolpyruvate binding site. Catalysis depends on Asp310, which acts as the Proton acceptor. The phosphoenolpyruvate site is built by Arg341, Arg384, and Lys410.

This sequence belongs to the EPSP synthase family. As to quaternary structure, monomer.

Its subcellular location is the cytoplasm. It catalyses the reaction 3-phosphoshikimate + phosphoenolpyruvate = 5-O-(1-carboxyvinyl)-3-phosphoshikimate + phosphate. It participates in metabolic intermediate biosynthesis; chorismate biosynthesis; chorismate from D-erythrose 4-phosphate and phosphoenolpyruvate: step 6/7. Its function is as follows. Catalyzes the transfer of the enolpyruvyl moiety of phosphoenolpyruvate (PEP) to the 5-hydroxyl of shikimate-3-phosphate (S3P) to produce enolpyruvyl shikimate-3-phosphate and inorganic phosphate. In Clostridium botulinum (strain Alaska E43 / Type E3), this protein is 3-phosphoshikimate 1-carboxyvinyltransferase.